Here is a 362-residue protein sequence, read N- to C-terminus: 3-dehydroquinate synthase (362 aa).

Residues 72-77 (DGEQYK), 106-110 (GVVGD), 130-131 (TT), Lys-143, Lys-152, and 170-173 (CLKT) contribute to the NAD(+) site. The Zn(2+) site is built by Glu-185, His-248, and His-265.

The protein belongs to the sugar phosphate cyclases superfamily. Dehydroquinate synthase family. The cofactor is Co(2+). Zn(2+) is required as a cofactor. Requires NAD(+) as cofactor.

The protein resides in the cytoplasm. The catalysed reaction is 7-phospho-2-dehydro-3-deoxy-D-arabino-heptonate = 3-dehydroquinate + phosphate. The protein operates within metabolic intermediate biosynthesis; chorismate biosynthesis; chorismate from D-erythrose 4-phosphate and phosphoenolpyruvate: step 2/7. Catalyzes the conversion of 3-deoxy-D-arabino-heptulosonate 7-phosphate (DAHP) to dehydroquinate (DHQ). This chain is 3-dehydroquinate synthase, found in Aliivibrio salmonicida (strain LFI1238) (Vibrio salmonicida (strain LFI1238)).